Here is a 166-residue protein sequence, read N- to C-terminus: Small ribosomal subunit protein uS5 (166 aa).

Residues 11–74 (LIDKVVHISR…ESAKRTMFEV (64 aa)) enclose the S5 DRBM domain.

Belongs to the universal ribosomal protein uS5 family. Part of the 30S ribosomal subunit. Contacts proteins S4 and S8.

With S4 and S12 plays an important role in translational accuracy. Functionally, located at the back of the 30S subunit body where it stabilizes the conformation of the head with respect to the body. The chain is Small ribosomal subunit protein uS5 from Syntrophobacter fumaroxidans (strain DSM 10017 / MPOB).